The chain runs to 537 residues: Arginine--tRNA ligase (537 aa).

A 'HIGH' region motif is present at residues 113–123 (ANPTGELHLGH).

This sequence belongs to the class-I aminoacyl-tRNA synthetase family. In terms of assembly, monomer.

The protein localises to the cytoplasm. The enzyme catalyses tRNA(Arg) + L-arginine + ATP = L-arginyl-tRNA(Arg) + AMP + diphosphate. The chain is Arginine--tRNA ligase (argS) from Mycoplasma pneumoniae (strain ATCC 29342 / M129 / Subtype 1) (Mycoplasmoides pneumoniae).